The sequence spans 268 residues: Glutamate racemase (268 aa).

Substrate-binding positions include 14-15 (DS) and 46-47 (YG). The active-site Proton donor/acceptor is cysteine 78. 79–80 (NT) serves as a coordination point for substrate. The active-site Proton donor/acceptor is cysteine 192. 193–194 (TH) contributes to the substrate binding site.

The protein belongs to the aspartate/glutamate racemases family.

It catalyses the reaction L-glutamate = D-glutamate. Its pathway is cell wall biogenesis; peptidoglycan biosynthesis. In terms of biological role, provides the (R)-glutamate required for cell wall biosynthesis. The polypeptide is Glutamate racemase (Sphingopyxis alaskensis (strain DSM 13593 / LMG 18877 / RB2256) (Sphingomonas alaskensis)).